The following is a 524-amino-acid chain: MEPMLLLILVAAVVLLFVRWAFVYGHRTSNMPKGPPTLPFIGNIHQIPTQYTHIKFTEWAAKYGGLYMLKVGNGNMAVVTDRRLVKEVVDRKSGIYSHRPHSFVSHELITKGNHLLVMHYGDQWRTFRRLIHQHLMESMVDSQHVKIVNAEAIQLVRDYLVDPEHHMAHPKRFSNSITNSIVFGIRTADRNGSNMKRLYKLMEEWSEIMETGATPPVDLFPWMKMLPQWMFSNYVNRAKAIGVQMETLYTDILNKVIKRRNGGQNLGTFMDRVLDGQEKNDLPWHQLAFIGGVLMEGGSDTSSSLTIAIVQALILNPAVQKKAHAEIDAVVGSDRSPVWEDLEKLPYINMIIKEGHRWRPILPLCFPHALGEDDWVDGKLLPKGTVVVINTWGMHMDPSQPDDPAAFIPERYANHPQLAPEYAAGKWENRDHYGYGVGRRICPGIHLAERNMFLAIAKLLWAFEFQRGEGKIDSDPVTGYHNGFLYCAKDYPCRPVVRNKTIRATIEREFATATKEVFSQFTEG.

Over 1–4 (MEPM) the chain is Cytoplasmic. Residues 5–23 (LLLILVAAVVLLFVRWAFV) traverse the membrane as a helical segment. The Lumenal portion of the chain corresponds to 24–524 (YGHRTSNMPK…KEVFSQFTEG (501 aa)). Asn-191 is a glycosylation site (N-linked (GlcNAc...) asparagine). Cys-442 is a binding site for heme. Residue Asn-499 is glycosylated (N-linked (GlcNAc...) asparagine).

Belongs to the cytochrome P450 family. Requires heme as cofactor.

It localises to the endoplasmic reticulum membrane. It catalyses the reaction 3-methylphenol + reduced [NADPH--hemoprotein reductase] + O2 = 3-hydroxybenzyl alcohol + oxidized [NADPH--hemoprotein reductase] + H2O + H(+). It functions in the pathway mycotoxin biosynthesis; patulin biosynthesis. In terms of biological role, cytochrome P450 monooxygenase; part of the gene cluster that mediates the biosynthesis of patulin, an acetate-derived tetraketide mycotoxin produced by several fungal species that shows antimicrobial properties against several bacteria. PatH catalyzes the conversion of m-cresol into m-hydroxybenzyl alcohol. The pathway begins with the synthesis of 6-methylsalicylic acid by the polyketide synthase (PKS) patK via condensation of acetate and malonate units. The 6-methylsalicylic acid decarboxylase patG then catalyzes the decarboxylation of 6-methylsalicylic acid to yield m-cresol (also known as 3-methylphenol). These first reactions occur in the cytosol. The intermediate m-cresol is then transported into the endoplasmic reticulum where the cytochrome P450 monooxygenase patH converts it to m-hydroxybenzyl alcohol, which is further converted to gentisyl alcohol by the cytochrome P450 monooxygenase patI. The oxidoreductases patJ and patO further convert gentisyl alcohol to isoepoxydon in the vacuole. PatN catalyzes then the transformation of isoepoxydon into phyllostine. The cluster protein patF is responsible for the conversion from phyllostine to neopatulin whereas the alcohol dehydrogenase patD converts neopatulin to E-ascladiol. The steps between isoepoxydon and E-ascladiol occur in the cytosol, and E-ascladiol is probably secreted to the extracellular space by one of the cluster-specific transporters patC or patM. Finally, the secreted patulin synthase patE catalyzes the conversion of E-ascladiol to patulin. The sequence is that of Cytochrome P450 monooxygenase patH from Aspergillus clavatus (strain ATCC 1007 / CBS 513.65 / DSM 816 / NCTC 3887 / NRRL 1 / QM 1276 / 107).